The following is a 444-amino-acid chain: Glutamyl-tRNA reductase (444 aa).

Residues Thr-49–Arg-52, Ser-109, Glu-114–Gln-116, and Gln-120 each bind substrate. Residue Cys-50 is the Nucleophile of the active site. Gly-189–Gly-194 contributes to the NADP(+) binding site.

This sequence belongs to the glutamyl-tRNA reductase family. In terms of assembly, homodimer.

It carries out the reaction (S)-4-amino-5-oxopentanoate + tRNA(Glu) + NADP(+) = L-glutamyl-tRNA(Glu) + NADPH + H(+). It participates in porphyrin-containing compound metabolism; protoporphyrin-IX biosynthesis; 5-aminolevulinate from L-glutamyl-tRNA(Glu): step 1/2. Functionally, catalyzes the NADPH-dependent reduction of glutamyl-tRNA(Glu) to glutamate 1-semialdehyde (GSA). The polypeptide is Glutamyl-tRNA reductase (Bacillus cereus (strain ATCC 10987 / NRS 248)).